The chain runs to 79 residues: Small ribosomal subunit protein uS17 (79 aa).

This sequence belongs to the universal ribosomal protein uS17 family. Part of the 30S ribosomal subunit.

Functionally, one of the primary rRNA binding proteins, it binds specifically to the 5'-end of 16S ribosomal RNA. The sequence is that of Small ribosomal subunit protein uS17 from Rhizobium johnstonii (strain DSM 114642 / LMG 32736 / 3841) (Rhizobium leguminosarum bv. viciae).